Here is a 701-residue protein sequence, read N- to C-terminus: Pentatricopeptide repeat-containing protein At5g50390, chloroplastic (701 aa).

Residues 1–47 (MEIPLSRYQSIRLDEIRDSSSNPKVLTFPRKFSLRGRRWKNPFGRLS) constitute a chloroplast transit peptide. PPR repeat units follow at residues 86–116 (SGVT…LEIR), 122–156 (GVST…GFEP), 157–187 (EQYM…IPER), 188–218 (NLYS…MWEE), 223–257 (ETHT…GVVD), 258–288 (NTFV…MPEK), 289–323 (TTVA…GVSI), 324–358 (DQFT…GFES), 359–389 (EIVA…LPRK), 390–424 (NIIS…NVAP), 425–460 (NHVT…GIKP), and 461–491 (RAMH…APLK). The tract at residues 496–571 (MWAALLNACR…MPACTWVEVG (76 aa)) is type E motif. The tract at residues 572–606 (DQTHSFLSGDRFDSYNETVKRQIYQKVDELMEEIS) is type E(+) motif; degenerate. The type DYW motif stretch occupies residues 607–701 (EYGYSEEEQH…EGKCSCGGYW (95 aa)).

The protein belongs to the PPR family. PCMP-H subfamily.

Its subcellular location is the plastid. It localises to the chloroplast. This Arabidopsis thaliana (Mouse-ear cress) protein is Pentatricopeptide repeat-containing protein At5g50390, chloroplastic (PCMP-H58).